Consider the following 321-residue polypeptide: uncharacterized protein (321 aa).

28 to 35 is a binding site for ATP; the sequence is GPINSGKT.

Belongs to the archaeal ATPase family.

This is an uncharacterized protein from Pyrococcus horikoshii (strain ATCC 700860 / DSM 12428 / JCM 9974 / NBRC 100139 / OT-3).